The chain runs to 341 residues: MKALSKLKAEKGIWLVDAPKPEMGHNDLLIKIKKTAICGTDMHIYNWDEWSQKTIPVPMVVGHEYVGEVVDIGQEVRGFKIGDRVSGEGHITCGHCRNCRAGRTHLCRNTSGVGVNREGSFAEYLVIPAFNAFKIPDDISDDLASIFDPFGNAVHTALSFDLVGEDVLITGAGPIGIMAAAVCRHVGARHVVITDVNEYRLELARKMGATRAVNVAQENLKDVMKELGMTEGFDVGLEMSGVPSAFHAMLDTMNHGGKIAMLGIPGGEMAIDWSKVIFKGLVIKGIYGREMFETWYKMASLIQSGLDISPIITHHYKIDDFQKGFDAMGSGQSGKVILSWD.

Cys38 serves as a coordination point for Zn(2+). Catalysis depends on charge relay system residues Thr40 and His43. Zn(2+) contacts are provided by His63, Glu64, Cys93, Cys96, Cys99, and Cys107. NAD(+) contacts are provided by residues Ile175, Asp195, Arg200, 262–264 (LGI), and 286–287 (IY).

It belongs to the zinc-containing alcohol dehydrogenase family. Homotetramer. Zn(2+) serves as cofactor.

The protein localises to the cytoplasm. It catalyses the reaction L-threonine + NAD(+) = (2S)-2-amino-3-oxobutanoate + NADH + H(+). It participates in amino-acid degradation; L-threonine degradation via oxydo-reductase pathway; glycine from L-threonine: step 1/2. Catalyzes the NAD(+)-dependent oxidation of L-threonine to 2-amino-3-ketobutyrate. This chain is L-threonine 3-dehydrogenase, found in Shewanella sp. (strain MR-7).